We begin with the raw amino-acid sequence, 451 residues long: Tryptophan biosynthesis protein TrpCF (451 aa).

The tract at residues 1 to 256 (MQETILNKII…TNIKSLIIGD (256 aa)) is indole-3-glycerol phosphate synthase. Residues 257-451 (NKVCGLTRII…ISLIFKKLTF (195 aa)) are N-(5'-phosphoribosyl)anthranilate isomerase.

It in the N-terminal section; belongs to the TrpC family. This sequence in the C-terminal section; belongs to the TrpF family. Monomer.

It carries out the reaction N-(5-phospho-beta-D-ribosyl)anthranilate = 1-(2-carboxyphenylamino)-1-deoxy-D-ribulose 5-phosphate. The enzyme catalyses 1-(2-carboxyphenylamino)-1-deoxy-D-ribulose 5-phosphate + H(+) = (1S,2R)-1-C-(indol-3-yl)glycerol 3-phosphate + CO2 + H2O. It functions in the pathway amino-acid biosynthesis; L-tryptophan biosynthesis; L-tryptophan from chorismate: step 3/5. Its pathway is amino-acid biosynthesis; L-tryptophan biosynthesis; L-tryptophan from chorismate: step 4/5. Its function is as follows. Bifunctional enzyme that catalyzes two sequential steps of tryptophan biosynthetic pathway. The first reaction is catalyzed by the isomerase, coded by the TrpF domain; the second reaction is catalyzed by the synthase, coded by the TrpC domain. This chain is Tryptophan biosynthesis protein TrpCF (trpC), found in Buchnera aphidicola subsp. Schizaphis graminum (strain Sg).